The following is a 194-amino-acid chain: uncharacterized protein (194 aa).

2 disordered regions span residues 1-72 (MAAK…PAAE) and 113-194 (VLIP…SLAV). Basic and acidic residues predominate over residues 26–39 (AEGRSSEGRKERTA). Residues 146–171 (GSSSTSRNQVASLAYRTQNTAASQPR) show a composition bias toward polar residues.

This is an uncharacterized protein from Homo sapiens (Human).